The chain runs to 145 residues: UPF0763 protein CFF8240_1572 (145 aa).

The protein belongs to the UPF0763 family.

The sequence is that of UPF0763 protein CFF8240_1572 from Campylobacter fetus subsp. fetus (strain 82-40).